A 572-amino-acid polypeptide reads, in one-letter code: Hemagglutinin-neuraminidase (572 aa).

Residues Met-1–Lys-31 lie on the Intravirion side of the membrane. The chain crosses the membrane as a helical span at residues Ile-32–Leu-52. The Virion surface portion of the chain corresponds to Ile-53–Ser-572. Cystine bridges form between Cys-190/Cys-214 and Cys-256/Cys-269. Residues Asn-252–Ser-257 form an involved in neuraminidase activity region. Asn-308 and Asn-351 each carry an N-linked (GlcNAc...) asparagine; by host glycan. 2 disulfides stabilise this stretch: Cys-355–Cys-469 and Cys-463–Cys-473. Asn-523 carries an N-linked (GlcNAc...) asparagine; by host glycan. An intrachain disulfide couples Cys-535 to Cys-544.

It belongs to the paramyxoviruses hemagglutinin-neuraminidase family. As to quaternary structure, homotetramer; composed of disulfide-linked homodimers. Interacts with F protein trimer.

Its subcellular location is the virion membrane. It is found in the host cell membrane. It carries out the reaction Hydrolysis of alpha-(2-&gt;3)-, alpha-(2-&gt;6)-, alpha-(2-&gt;8)- glycosidic linkages of terminal sialic acid residues in oligosaccharides, glycoproteins, glycolipids, colominic acid and synthetic substrates.. Functionally, attaches the virus to sialic acid-containing cell receptors and thereby initiating infection. Binding of HN protein to the receptor induces a conformational change that allows the F protein to trigger virion/cell membranes fusion. Its function is as follows. Neuraminidase activity ensures the efficient spread of the virus by dissociating the mature virions from the neuraminic acid containing glycoproteins. This chain is Hemagglutinin-neuraminidase (HN), found in Homo sapiens (Human).